The chain runs to 105 residues: MTWDIEQFNKLVSAEEYFEFFQLPYDPRVVQVSRLHILKQFSQSIQEIDANNSQASQAEKLDLYCTALKQAYEVFLSSTPLEQKLFKVFKQKPKNIVMLTEIATS.

The protein belongs to the NifW family.

Its function is as follows. May protect the nitrogenase Fe-Mo protein from oxidative damage. This chain is Nitrogenase-stabilizing/protective protein NifW 2 (nifW2), found in Trichormus variabilis (strain ATCC 29413 / PCC 7937) (Anabaena variabilis).